The primary structure comprises 577 residues: Arginine--tRNA ligase (577 aa).

The short motif at 122–132 (PNVAKEMHVGH) is the 'HIGH' region element.

This sequence belongs to the class-I aminoacyl-tRNA synthetase family. As to quaternary structure, monomer.

It is found in the cytoplasm. It carries out the reaction tRNA(Arg) + L-arginine + ATP = L-arginyl-tRNA(Arg) + AMP + diphosphate. In Salmonella newport (strain SL254), this protein is Arginine--tRNA ligase.